We begin with the raw amino-acid sequence, 187 residues long: Acireductone dioxygenase 4 (187 aa).

An N-acetylalanine modification is found at Ala2. Fe(2+) is bound by residues His89, His91, Glu95, and His134. Ni(2+) contacts are provided by His89, His91, Glu95, and His134.

Belongs to the acireductone dioxygenase (ARD) family. Fe(2+) serves as cofactor. It depends on Ni(2+) as a cofactor.

Its subcellular location is the cytoplasm. It is found in the nucleus. The catalysed reaction is 1,2-dihydroxy-5-(methylsulfanyl)pent-1-en-3-one + O2 = 4-methylsulfanyl-2-oxobutanoate + formate + 2 H(+). It catalyses the reaction 1,2-dihydroxy-5-(methylsulfanyl)pent-1-en-3-one + O2 = 3-(methylsulfanyl)propanoate + CO + formate + 2 H(+). It functions in the pathway amino-acid biosynthesis; L-methionine biosynthesis via salvage pathway; L-methionine from S-methyl-5-thio-alpha-D-ribose 1-phosphate: step 5/6. Catalyzes 2 different reactions between oxygen and the acireductone 1,2-dihydroxy-3-keto-5-methylthiopentene (DHK-MTPene) depending upon the metal bound in the active site. Fe-containing acireductone dioxygenase (Fe-ARD) produces formate and 2-keto-4-methylthiobutyrate (KMTB), the alpha-ketoacid precursor of methionine in the methionine recycle pathway. Ni-containing acireductone dioxygenase (Ni-ARD) produces methylthiopropionate, carbon monoxide and formate, and does not lie on the methionine recycle pathway. This is Acireductone dioxygenase 4 (ARD4) from Arabidopsis thaliana (Mouse-ear cress).